Consider the following 341-residue polypeptide: Phenylalanine--tRNA ligase alpha subunit (341 aa).

A Mg(2+)-binding site is contributed by glutamate 256.

Belongs to the class-II aminoacyl-tRNA synthetase family. Phe-tRNA synthetase alpha subunit type 1 subfamily. As to quaternary structure, tetramer of two alpha and two beta subunits. It depends on Mg(2+) as a cofactor.

Its subcellular location is the cytoplasm. It carries out the reaction tRNA(Phe) + L-phenylalanine + ATP = L-phenylalanyl-tRNA(Phe) + AMP + diphosphate + H(+). This Chlamydia caviae (strain ATCC VR-813 / DSM 19441 / 03DC25 / GPIC) (Chlamydophila caviae) protein is Phenylalanine--tRNA ligase alpha subunit.